We begin with the raw amino-acid sequence, 473 residues long: Exodeoxyribonuclease I (473 aa).

The Exonuclease domain occupies Ile-9 to Ala-188. Asp-11, Glu-13, and Asp-182 together coordinate Mg(2+). A substrate-binding site is contributed by Glu-13. An ExoI SH3-like domain is found at Pro-198–Arg-353. An ExoI C-terminal domain is found at Ala-356–Leu-472.

As to quaternary structure, monomer. Interacts with ssb (via C-terminus); this interaction stimulates the exonuclease activity by recruiting the enzyme to its substrate. It depends on Mg(2+) as a cofactor.

It carries out the reaction Exonucleolytic cleavage in the 3'- to 5'-direction to yield nucleoside 5'-phosphates.. Its function is as follows. Degrades single-stranded DNA (ssDNA) in a highly processive manner. Also functions as a DNA deoxyribophosphodiesterase that releases deoxyribose-phosphate moieties following the cleavage of DNA at an apurinic/apyrimidinic (AP) site by either an AP endonuclease or AP lyase. Involved in genome maintenance but probably not in phase variation, which contributes to the virulence and disease. The sequence is that of Exodeoxyribonuclease I (sbcB) from Haemophilus influenzae (strain ATCC 51907 / DSM 11121 / KW20 / Rd).